The following is a 76-amino-acid chain: UPF0235 protein MMAR_2910 (76 aa).

Belongs to the UPF0235 family.

This chain is UPF0235 protein MMAR_2910, found in Mycobacterium marinum (strain ATCC BAA-535 / M).